We begin with the raw amino-acid sequence, 297 residues long: Lysenin (297 aa).

The tract at residues 10–33 (EQIEVDVVAVWKEGYVYENRGSTS) is N-terminal cap domain. The segment at 34–107 (VDQKITITKG…SKVIEHTITI (74 aa)) is beta-hairpin domain. The interval 108-156 (PPTSKFTRWQLNADVGGADIEYMYLIDEVTPIGGTQSIPQVITSRAKII) is N-terminal cap domain. A C-terminal receptor-binding domain region spans residues 157-297 (VGRQIILGKT…EDKWILEVVG (141 aa)). Residues lysine 185, serine 227, tyrosine 233, and tyrosine 282 each contribute to the an N-(acyl)-sphingosylphosphocholine site. A disulfide bridge connects residues cysteine 272 and cysteine 283.

Belongs to the lysenin family. As to quaternary structure, binds to sphingomyelin as a monomer by using its C-terminal domain. Forms a nonamer when sphingomyelin/lysenin ratio is lower than ca 500. Oligomerization, but not binding, is influenced by the fluidity of sphingomyelin. In terms of tissue distribution, expressed by coelomocytes.

It is found in the secreted. It localises to the target cell membrane. Its function is as follows. Pore-forming toxin that defensively acts against parasitic microorganisms by forming pores in sphingomyelin-containing membranes. Has hemolytic activity and is also cytotoxic to spermatozoa of some species of invertebrates and many species of vertebrates and to amphibian larvae, guinea pig polymorphonuclear leukocytes, chicken fibroblasts, normal spleen cells and various tumor cells. Is lethal for various species of reptiles, amphibian, birds and mammals. Induces smooth muscle contraction. It binds sphingomyelin and induces hemolysis in the same manner as lysenin-related protein 2, and is 10-fold more effective than lysenin-related protein 1. In Eisenia fetida (Red wiggler worm), this protein is Lysenin.